The following is a 67-amino-acid chain: (2R)-sulfolactate sulfo-lyase subunit alpha (67 aa).

(2R)-sulfolactate sulfo-lyase is composed of a SuyA and a SuyB subunit.

The protein resides in the cytoplasm. It catalyses the reaction (2R)-3-sulfolactate = sulfite + pyruvate + H(+). Its function is as follows. Together with SuyB, desulfonates sulfolactate to pyruvate and sulfite. In Paracoccus pantotrophus (Thiosphaera pantotropha), this protein is (2R)-sulfolactate sulfo-lyase subunit alpha (suyA).